Consider the following 197-residue polypeptide: Ribonuclease HII (197 aa).

The RNase H type-2 domain occupies 10–197 (ELIAGVDEVG…APVRKLLNTL (188 aa)). Asp16, Glu17, and Asp108 together coordinate a divalent metal cation.

The protein belongs to the RNase HII family. The cofactor is Mn(2+). It depends on Mg(2+) as a cofactor.

Its subcellular location is the cytoplasm. The catalysed reaction is Endonucleolytic cleavage to 5'-phosphomonoester.. Functionally, endonuclease that specifically degrades the RNA of RNA-DNA hybrids. The chain is Ribonuclease HII (rnhB) from Pasteurella multocida (strain Pm70).